The primary structure comprises 1248 residues: Ankyrin repeat and sterile alpha motif domain-containing protein 1B (1248 aa).

7 ANK repeats span residues 2–31, 58–87, 91–120, 127–156, 160–189, 193–222, and 225–254; these read GKDQ…GGIL, SGYT…STNV, KGYF…SHSR, ENET…DPTI, KLET…NLMS, RKHT…DVSC, and EKGS…DANI. The interval 296–322 is disordered; it reads EPVQEDATQETHISSPVESPSQKTKSE. Residues 305 to 322 are compositionally biased toward polar residues; it reads ETHISSPVESPSQKTKSE. Phosphoserine occurs at positions 309, 310, 314, 353, and 364. Disordered regions lie at residues 367–400, 474–514, and 558–623; these read ELGK…NTCG, APSP…PDTA, and SFTA…ENPF. Polar residues predominate over residues 371 to 384; that stretch reads NGSQSVRTSSTINL. Acidic residues predominate over residues 388 to 397; the sequence is EVEEEDDDEN. Phosphothreonine is present on Thr-503. Phosphoserine occurs at positions 507 and 510. Positions 558–575 are enriched in low complexity; it reads SFTASPPASPPTSSVGTT. Residues 577 to 601 are compositionally biased toward basic and acidic residues; sequence VKNEGTNHTDDLSRQDDNDPPKEYD. The residue at position 738 (Ser-738) is a Phosphoserine. The tract at residues 749–777 is disordered; that stretch reads EKTSRVNWSESSTAEHSSKGNSERTPSFT. Residues 753 to 763 are compositionally biased toward polar residues; it reads RVNWSESSTAE. Thr-773 is modified (phosphothreonine). Ser-775 carries the phosphoserine modification. SAM domains follow at residues 810–876 and 884–949; these read CPVQ…LPKM and YHPT…RLHD. Tyr-901 carries the phosphotyrosine modification. The short motif at 935–938 is the Nuclear localization signal element; it reads HRKR. Positions 944–989 are disordered; it reads GDRLHDDPPQKPPRSITLREPSGNHTPPQLSPSLSQSTYTTGGSLD. Residues 969–984 show a composition bias toward low complexity; that stretch reads TPPQLSPSLSQSTYTT. Ser-974 bears the Phosphoserine mark. Tyr-1007 carries the phosphotyrosine modification. The PID domain maps to 1056–1213; sequence IFQSCDYKAF…SFENKPSKPI (158 aa). A disordered region spans residues 1197–1248; that stretch reads HSSTLPESFENKPSKPIPKPRVSIRKSVDLLHASHTGQEPSERHTEEALRKF. Residues 1236–1248 are compositionally biased toward basic and acidic residues; that stretch reads PSERHTEEALRKF.

As to quaternary structure, isoform 3 interacts with DLG4. Interacts with EPHA8. Isoform 2 interacts with COIL. Isoform 4 interacts with APP and EPHA8. Isoform 6 interacts with EPHA8. Post-translationally, isoform 3 nuclear translocation requires an NMDAR-dependent proteolytic cleavage. In terms of tissue distribution, highly expressed in marrow from patients with pre-B ALL associated with the t(1;19) translocation. Strongly expressed in brain and testis. Expressed in fetal brain. Isoform 4 is highly expressed in brain (at protein level). Isoform 6 is expressed in brain and several cancer cell lines.

Its subcellular location is the cytoplasm. The protein localises to the nucleus. It is found in the postsynaptic density. The protein resides in the cell projection. It localises to the dendritic spine. Its subcellular location is the cajal body. In terms of biological role, isoform 2 may participate in the regulation of nucleoplasmic coilin protein interactions in neuronal and transformed cells. Its function is as follows. Isoform 3 can regulate global protein synthesis by altering nucleolar numbers. Functionally, isoform 4 may play a role as a modulator of APP processing. Overexpression can down-regulate APP processing. The sequence is that of Ankyrin repeat and sterile alpha motif domain-containing protein 1B (ANKS1B) from Homo sapiens (Human).